We begin with the raw amino-acid sequence, 340 residues long: Guanine nucleotide-binding protein G(I)/G(S)/G(T) subunit beta-1 (340 aa).

WD repeat units lie at residues 53 to 83 (GHLA…IIWD), 95 to 125 (LRSS…SIYN), 141 to 170 (GHTG…ALWD), 182 to 212 (GHTG…KLWD), 224 to 254 (GHES…RLFD), 268 to 298 (NIIC…NVWD), and 310 to 340 (GHDN…KIWN).

Belongs to the WD repeat G protein beta family. As to quaternary structure, g proteins are composed of 3 units, alpha, beta and gamma.

Functionally, guanine nucleotide-binding proteins (G proteins) are involved as a modulator or transducer in various transmembrane signaling systems. The beta and gamma chains are required for the GTPase activity, for replacement of GDP by GTP, and for G protein-effector interaction. The sequence is that of Guanine nucleotide-binding protein G(I)/G(S)/G(T) subunit beta-1 (gnb1) from Danio rerio (Zebrafish).